Here is a 597-residue protein sequence, read N- to C-terminus: Lysine--tRNA ligase (597 aa).

Mg(2+) is bound by residues E501 and E508.

This sequence belongs to the class-II aminoacyl-tRNA synthetase family. As to quaternary structure, homodimer. It depends on Mg(2+) as a cofactor.

The protein resides in the cytoplasm. It carries out the reaction tRNA(Lys) + L-lysine + ATP = L-lysyl-tRNA(Lys) + AMP + diphosphate. This Aquifex aeolicus (strain VF5) protein is Lysine--tRNA ligase (lysS).